Here is a 283-residue protein sequence, read N- to C-terminus: Phosphatidylserine decarboxylase proenzyme (283 aa).

Active-site charge relay system; for autoendoproteolytic cleavage activity residues include Asp88, His145, and Ser248. Residue Ser248 is the Schiff-base intermediate with substrate; via pyruvic acid; for decarboxylase activity of the active site. Residue Ser248 is modified to Pyruvic acid (Ser); by autocatalysis.

This sequence belongs to the phosphatidylserine decarboxylase family. PSD-B subfamily. Prokaryotic type I sub-subfamily. In terms of assembly, heterodimer of a large membrane-associated beta subunit and a small pyruvoyl-containing alpha subunit. Requires pyruvate as cofactor. Is synthesized initially as an inactive proenzyme. Formation of the active enzyme involves a self-maturation process in which the active site pyruvoyl group is generated from an internal serine residue via an autocatalytic post-translational modification. Two non-identical subunits are generated from the proenzyme in this reaction, and the pyruvate is formed at the N-terminus of the alpha chain, which is derived from the carboxyl end of the proenzyme. The autoendoproteolytic cleavage occurs by a canonical serine protease mechanism, in which the side chain hydroxyl group of the serine supplies its oxygen atom to form the C-terminus of the beta chain, while the remainder of the serine residue undergoes an oxidative deamination to produce ammonia and the pyruvoyl prosthetic group on the alpha chain. During this reaction, the Ser that is part of the protease active site of the proenzyme becomes the pyruvoyl prosthetic group, which constitutes an essential element of the active site of the mature decarboxylase.

Its subcellular location is the cell membrane. It carries out the reaction a 1,2-diacyl-sn-glycero-3-phospho-L-serine + H(+) = a 1,2-diacyl-sn-glycero-3-phosphoethanolamine + CO2. It functions in the pathway phospholipid metabolism; phosphatidylethanolamine biosynthesis; phosphatidylethanolamine from CDP-diacylglycerol: step 2/2. Its function is as follows. Catalyzes the formation of phosphatidylethanolamine (PtdEtn) from phosphatidylserine (PtdSer). This is Phosphatidylserine decarboxylase proenzyme from Methylibium petroleiphilum (strain ATCC BAA-1232 / LMG 22953 / PM1).